The following is a 408-amino-acid chain: Ribosomal RNA large subunit methyltransferase DR_0049 (408 aa).

The protein belongs to the methyltransferase superfamily.

It carries out the reaction cytidine(2499) in 23S rRNA + S-adenosyl-L-methionine = 5-methylcytidine(2499) in 23S rRNA + S-adenosyl-L-homocysteine + H(+). In terms of biological role, specifically methylates the cytosine at position 2499 (m5C2499) of 23S rRNA. In Deinococcus radiodurans (strain ATCC 13939 / DSM 20539 / JCM 16871 / CCUG 27074 / LMG 4051 / NBRC 15346 / NCIMB 9279 / VKM B-1422 / R1), this protein is Ribosomal RNA large subunit methyltransferase DR_0049.